The chain runs to 549 residues: Cytoplasmic trehalase (549 aa).

Substrate contacts are provided by residues arginine 168, 175 to 176 (WD), asparagine 212, 221 to 223 (RSQ), 292 to 294 (RDE), and glycine 324. Residues aspartate 326 and glutamate 509 each act as proton donor/acceptor in the active site. Glutamate 525 contacts substrate.

This sequence belongs to the glycosyl hydrolase 37 family. In terms of assembly, monomer.

It localises to the cytoplasm. The enzyme catalyses alpha,alpha-trehalose + H2O = alpha-D-glucose + beta-D-glucose. It participates in glycan degradation; trehalose degradation; D-glucose from alpha,alpha-trehalose: step 1/1. Functionally, hydrolyzes trehalose to glucose. Could be involved, in cells returning to low osmolarity conditions, in the utilization of the accumulated cytoplasmic trehalose, which was synthesized in response to high osmolarity. The chain is Cytoplasmic trehalase from Escherichia coli O81 (strain ED1a).